A 232-amino-acid polypeptide reads, in one-letter code: 26.5 kDa heat shock protein, mitochondrial (232 aa).

The N-terminal 42 residues, M1–M42, are a transit peptide targeting the mitochondrion. The disordered stretch occupies residues T44–T82. Positions Q49–S64 are enriched in basic and acidic residues. Over residues F69 to L78 the composition is skewed to basic residues. The region spanning I114–E232 is the sHSP domain.

This sequence belongs to the small heat shock protein (HSP20) family. May form oligomeric structures.

It localises to the mitochondrion. The polypeptide is 26.5 kDa heat shock protein, mitochondrial (HSP26.5) (Arabidopsis thaliana (Mouse-ear cress)).